Here is a 141-residue protein sequence, read N- to C-terminus: VLSPADKKNVKDCWEKIGGHGAEYGAEALERMFLSFPTTKTYFPHFDLSHGSAQVQGHGKKVADALANAAAHVDDLPGALSALSDLHAHKLRVDPVNFKLLSHCLLVTLAAHHPAEFTPAVHASLDKFLASVSTVLTSKYR.

Residues 1-141 (VLSPADKKNV…VSTVLTSKYR (141 aa)) enclose the Globin domain. A Phosphoserine modification is found at Ser3. N6-succinyllysine is present on residues Lys7 and Lys11. Lys16 is subject to N6-acetyllysine; alternate. Lys16 carries the N6-succinyllysine; alternate modification. Phosphotyrosine is present on Tyr24. Phosphoserine is present on Ser35. Lys40 carries the N6-succinyllysine modification. Ser49 carries the post-translational modification Phosphoserine. His58 contributes to the O2 binding site. Position 87 (His87) interacts with heme b. Position 102 is a phosphoserine (Ser102). The residue at position 108 (Thr108) is a Phosphothreonine. A phosphoserine mark is found at Ser124 and Ser131. Thr134 and Thr137 each carry phosphothreonine. Ser138 bears the Phosphoserine mark.

This sequence belongs to the globin family. In terms of assembly, heterotetramer of two alpha chains and two beta chains. In terms of tissue distribution, red blood cells.

Involved in oxygen transport from the lung to the various peripheral tissues. In terms of biological role, hemopressin acts as an antagonist peptide of the cannabinoid receptor CNR1. Hemopressin-binding efficiently blocks cannabinoid receptor CNR1 and subsequent signaling. In Spermophilus citellus (European ground squirrel), this protein is Hemoglobin subunit alpha (HBA).